The chain runs to 427 residues: Enolase (427 aa).

Gln163 is a (2R)-2-phosphoglycerate binding site. Glu205 (proton donor) is an active-site residue. Residues Asp242, Glu285, and Asp312 each contribute to the Mg(2+) site. Lys337, Arg366, Ser367, and Lys388 together coordinate (2R)-2-phosphoglycerate. Lys337 (proton acceptor) is an active-site residue.

The protein belongs to the enolase family. Mg(2+) is required as a cofactor.

It is found in the cytoplasm. It localises to the secreted. The protein resides in the cell surface. It catalyses the reaction (2R)-2-phosphoglycerate = phosphoenolpyruvate + H2O. The protein operates within carbohydrate degradation; glycolysis; pyruvate from D-glyceraldehyde 3-phosphate: step 4/5. Catalyzes the reversible conversion of 2-phosphoglycerate (2-PG) into phosphoenolpyruvate (PEP). It is essential for the degradation of carbohydrates via glycolysis. This is Enolase from Nitrobacter hamburgensis (strain DSM 10229 / NCIMB 13809 / X14).